The sequence spans 409 residues: MAQNFTKLNPQFENIIFEHDDNQMILNFGPQHPSSHGQLRLILELEGEKIIKATPEIGYLHRGCEKLGENMTYNEYMPTTDRLDYTSSTSNNYAYAYAVETLLNLEIPRRAQVIRTILLELNRMISHIFFISVHALDVGAMSVFLYAFKTREYGLDLMEDYCGARLTHNAIRIGGVPLDLPPNWLEGLKKFLGEMRECKKLIQGLLDKNRIWRMRLENVGVVTPKMAQSWGMSGIMLRGTGIAYDIRKEEPYELYKELDFDVPVGNYGDSYDRYCLYMLEIDESIRIIEQLIPMYAKTDTPIMAQNPHYISAPKEDIMTQNYALMQHFVLVAQGMRPPVGEVYAPTESPKGELGFFIHSEGEPYPHRLKIRAPSFYHIGALSDILVGQYLADAVTVIGSTNAVFGEVDR.

Belongs to the complex I 49 kDa subunit family. In terms of assembly, NDH-1 is composed of 14 different subunits. Subunits NuoB, C, D, E, F, and G constitute the peripheral sector of the complex.

It localises to the cell inner membrane. It catalyses the reaction a quinone + NADH + 5 H(+)(in) = a quinol + NAD(+) + 4 H(+)(out). In terms of biological role, NDH-1 shuttles electrons from NADH, via FMN and iron-sulfur (Fe-S) centers, to quinones in the respiratory chain. The immediate electron acceptor for the enzyme in this species is believed to be ubiquinone. Couples the redox reaction to proton translocation (for every two electrons transferred, four hydrogen ions are translocated across the cytoplasmic membrane), and thus conserves the redox energy in a proton gradient. The protein is NADH-quinone oxidoreductase subunit D of Helicobacter pylori (strain P12).